The chain runs to 274 residues: Ribosome biogenesis protein UTP30 (274 aa).

Belongs to the universal ribosomal protein uL1 family. Highly divergent. In terms of assembly, component of the 90S pre-ribosomes. Interacts with FAF1.

Its subcellular location is the nucleus. It localises to the nucleolus. Functionally, involved in rRNA-processing and ribosome biosynthesis. This Saccharomyces cerevisiae (strain ATCC 204508 / S288c) (Baker's yeast) protein is Ribosome biogenesis protein UTP30 (UTP30).